Consider the following 299-residue polypeptide: Foldase protein PrsA (299 aa).

Residues 1-19 (MKKWTIAASLSIGVLALSA) form the signal peptide. Residue C20 is the site of N-palmitoyl cysteine attachment. C20 carries S-diacylglycerol cysteine lipidation. Residues 137-227 (NTEIQAQHIL…HGTHIIKVND (91 aa)) form the PpiC domain.

Belongs to the PrsA family.

It is found in the cell membrane. The enzyme catalyses [protein]-peptidylproline (omega=180) = [protein]-peptidylproline (omega=0). Its function is as follows. Plays a major role in protein secretion by helping the post-translocational extracellular folding of several secreted proteins. This Oceanobacillus iheyensis (strain DSM 14371 / CIP 107618 / JCM 11309 / KCTC 3954 / HTE831) protein is Foldase protein PrsA.